A 102-amino-acid polypeptide reads, in one-letter code: Small ribosomal subunit protein uS10 (102 aa).

This sequence belongs to the universal ribosomal protein uS10 family. In terms of assembly, part of the 30S ribosomal subunit.

In terms of biological role, involved in the binding of tRNA to the ribosomes. This chain is Small ribosomal subunit protein uS10, found in Methylobacillus flagellatus (strain ATCC 51484 / DSM 6875 / VKM B-1610 / KT).